The chain runs to 226 residues: tRNA (guanine-N(7)-)-methyltransferase (226 aa).

S-adenosyl-L-methionine is bound by residues Asp-59, Glu-84, and Asp-111. Asp-169 contributes to the substrate binding site.

The protein belongs to the class I-like SAM-binding methyltransferase superfamily. TrmB family.

It carries out the reaction guanosine(46) in tRNA + S-adenosyl-L-methionine = N(7)-methylguanosine(46) in tRNA + S-adenosyl-L-homocysteine. It functions in the pathway tRNA modification; N(7)-methylguanine-tRNA biosynthesis. In terms of biological role, catalyzes the formation of N(7)-methylguanine at position 46 (m7G46) in tRNA. The sequence is that of tRNA (guanine-N(7)-)-methyltransferase from Chloroherpeton thalassium (strain ATCC 35110 / GB-78).